Reading from the N-terminus, the 95-residue chain is Aspartyl/glutamyl-tRNA(Asn/Gln) amidotransferase subunit C (95 aa).

Belongs to the GatC family. Heterotrimer of A, B and C subunits.

The catalysed reaction is L-glutamyl-tRNA(Gln) + L-glutamine + ATP + H2O = L-glutaminyl-tRNA(Gln) + L-glutamate + ADP + phosphate + H(+). It catalyses the reaction L-aspartyl-tRNA(Asn) + L-glutamine + ATP + H2O = L-asparaginyl-tRNA(Asn) + L-glutamate + ADP + phosphate + 2 H(+). Its function is as follows. Allows the formation of correctly charged Asn-tRNA(Asn) or Gln-tRNA(Gln) through the transamidation of misacylated Asp-tRNA(Asn) or Glu-tRNA(Gln) in organisms which lack either or both of asparaginyl-tRNA or glutaminyl-tRNA synthetases. The reaction takes place in the presence of glutamine and ATP through an activated phospho-Asp-tRNA(Asn) or phospho-Glu-tRNA(Gln). In Methylorubrum populi (strain ATCC BAA-705 / NCIMB 13946 / BJ001) (Methylobacterium populi), this protein is Aspartyl/glutamyl-tRNA(Asn/Gln) amidotransferase subunit C.